Reading from the N-terminus, the 650-residue chain is uncharacterized protein (650 aa).

This is an uncharacterized protein from Caenorhabditis elegans.